The sequence spans 284 residues: MTAVTAAQRSVPAPFLSKTYQLVDDHSTDDVVSWNEEGTAFVVWKTAEFAKDLLPQYFKHNNFSSFIRQLNTYGFRKTVPDKWEFANDYFRRGGEDLLTDIRRRKSVIASTAGKCVVVGSPSESNSGGGDDHGSSSTSSPGSSKNPGSVENMVADLSGENEKLKRENNNLSSELAAAKKQRDELVTFLTGHLKVRPEQIDKMIKGGKFKPVESDEESECEGCDGGGGAEEGVGEGLKLFGVWLKGERKKRDRDEKNYVVSGSRMTEIKNVDFHAPLWKSSKVCN.

Residues 12-106 (PAPFLSKTYQ…LLTDIRRRKS (95 aa)) mediate DNA binding. A disordered region spans residues 118-151 (VGSPSESNSGGGDDHGSSSTSSPGSSKNPGSVEN). Low complexity predominate over residues 134–148 (SSSTSSPGSSKNPGS). Residues 147-192 (GSVENMVADLSGENEKLKRENNNLSSELAAAKKQRDELVTFLTGHL) are hydrophobic repeat HR-A/B. Positions 247 to 252 (RKKRDR) match the Nuclear localization signal motif.

It belongs to the HSF family. Class B subfamily. In terms of assembly, homotrimer. Post-translationally, exhibits temperature-dependent phosphorylation.

The protein resides in the nucleus. In terms of biological role, transcriptional regulator that specifically binds DNA sequence 5'-AGAAnnTTCT-3' known as heat shock promoter elements (HSE). The sequence is that of Heat stress transcription factor B-1 (HSFB1) from Arabidopsis thaliana (Mouse-ear cress).